The sequence spans 311 residues: Non-homologous end joining protein Ku (311 aa).

The region spanning 26-210 is the Ku domain; it reads ISFGLVNIPI…NVNDKELQTA (185 aa). Residues 269–311 form a disordered region; that stretch reads ASIDRTRRPNRETPAAAPAQAAEPKGAGDKKQKTTRKKASGTS. Over residues 282-293 the composition is skewed to low complexity; that stretch reads PAAAPAQAAEPK. Basic residues predominate over residues 301–311; sequence KTTRKKASGTS.

The protein belongs to the prokaryotic Ku family. In terms of assembly, homodimer. Interacts with LigD.

The protein localises to the spore core. In terms of biological role, with LigD forms a non-homologous end joining (NHEJ) DNA repair enzyme, which repairs dsDNA breaks with reduced fidelity. Binds linear dsDNA with 5'- and 3'- overhangs but not closed circular dsDNA nor ssDNA. Recruits and stimulates the ligase activity of LigD. Probably involved in DNA repair during spore germination. The chain is Non-homologous end joining protein Ku from Bacillus subtilis (strain 168).